We begin with the raw amino-acid sequence, 239 residues long: Small ribosomal subunit protein uS2 (239 aa).

It belongs to the universal ribosomal protein uS2 family.

This chain is Small ribosomal subunit protein uS2, found in Synechococcus sp. (strain CC9902).